A 93-amino-acid chain; its full sequence is MVMLMEQFIGIVKDILVLIASFGILLASYRLWIEKDRKNIIYARIHILGVIDCACFLIFIALGETLLAFVYLILAPFLAHAIAHAAYNDNLSE.

The next 2 membrane-spanning stretches (helical) occupy residues 8–28 (FIGI…LLAS) and 54–74 (ACFL…YLIL).

Its subcellular location is the cell membrane. This is an uncharacterized protein from Methanocaldococcus jannaschii (strain ATCC 43067 / DSM 2661 / JAL-1 / JCM 10045 / NBRC 100440) (Methanococcus jannaschii).